Here is a 391-residue protein sequence, read N- to C-terminus: Pectin acetylesterase 11 (391 aa).

The first 23 residues, 1–23 (MTWLKQMWSSILVLAVVVIGARA), serve as a signal peptide directing secretion. Active-site charge relay system residues include serine 171, aspartate 267, and histidine 334.

Belongs to the pectinacetylesterase family.

Its subcellular location is the secreted. The protein localises to the cell wall. Its function is as follows. Hydrolyzes acetyl esters in homogalacturonan regions of pectin. In type I primary cell wall, galacturonic acid residues of pectin can be acetylated at the O-2 and O-3 positions. Decreasing the degree of acetylation of pectin gels in vitro alters their physical properties. The sequence is that of Pectin acetylesterase 11 from Arabidopsis thaliana (Mouse-ear cress).